Here is a 170-residue protein sequence, read N- to C-terminus: Large ribosomal subunit protein uL5 (170 aa).

This sequence belongs to the universal ribosomal protein uL5 family. In terms of assembly, part of the 50S ribosomal subunit; contacts the 5S rRNA and probably tRNA. Forms a bridge to the 30S subunit in the 70S ribosome.

This is one of the proteins that bind and probably mediate the attachment of the 5S RNA into the large ribosomal subunit, where it forms part of the central protuberance. In the 70S ribosome it contacts protein S13 of the 30S subunit (bridge B1b), connecting the 2 subunits; this bridge is implicated in subunit movement. May contact the P site tRNA; the 5S rRNA and some of its associated proteins might help stabilize positioning of ribosome-bound tRNAs. The protein is Large ribosomal subunit protein uL5 of Thermoplasma acidophilum (strain ATCC 25905 / DSM 1728 / JCM 9062 / NBRC 15155 / AMRC-C165).